A 163-amino-acid chain; its full sequence is MAMVSGRRSTLNPDAPLFIPAAVRQVEDFSPEWWQLVTTSTWYPDYWISQQQQGADGFYDNGENENGGGHIDVADLLPESFDFDDMEDFFDTDAAEFDQGFDGRMYYQAPSEFGFGKNGEMVKKSSGNRSPRSIVEPAKYAEKPAKWGNQRVAAAPRNIHQPR.

Residues 10–20 (TLNPDAPLFIP) carry the PAM2-like motif. Residues 118 to 163 (NGEMVKKSSGNRSPRSIVEPAKYAEKPAKWGNQRVAAAPRNIHQPR) form a disordered region.

As to quaternary structure, interacts with PAB2, PAB4 and PAB8. Interacts with MPC. Expressed in cauline leaves, stems, rosette leaves, immature siliques and primary inflorescences.

The protein localises to the cytoplasm. Functionally, central component of stress responses that interacts with poly(A)-binding proteins. Negative regulator of abscisic acid (ABA) responses, including resistance to drought and freezing as well as stomatal closure regulation. Mediates resistance to the bacterial necrotroph pathogen Erwinia carotovora subsp. carotovora and promotes the induction of marker genes for systemic acquired resistance (SAR). The polypeptide is Protein EARLY RESPONSIVE TO DEHYDRATION 15 (ERD15) (Arabidopsis thaliana (Mouse-ear cress)).